A 435-amino-acid chain; its full sequence is Eukaryotic peptide chain release factor subunit 1 (435 aa).

Belongs to the eukaryotic release factor 1 family. As to quaternary structure, heterodimer of two subunits, one of which binds GTP.

It localises to the cytoplasm. Functionally, directs the termination of nascent peptide synthesis (translation) in response to the termination codons UAA, UAG and UGA. This chain is Eukaryotic peptide chain release factor subunit 1 (SU2), found in Podospora anserina (Pleurage anserina).